Consider the following 487-residue polypeptide: Betaine aldehyde dehydrogenase (487 aa).

K(+)-binding residues include isoleucine 27 and aspartate 93. NAD(+) is bound at residue 149-151; it reads GAW. Lysine 161 acts as the Charge relay system in catalysis. Residues 175–178 and 228–231 contribute to the NAD(+) site; these read KPSE and SVPT. Leucine 243 serves as a coordination point for K(+). Glutamate 249 functions as the Proton acceptor in the catalytic mechanism. The NAD(+) site is built by glycine 251, cysteine 283, and glutamate 384. The active-site Nucleophile is cysteine 283. At cysteine 283 the chain carries Cysteine sulfenic acid (-SOH). Residues lysine 454 and glycine 457 each contribute to the K(+) site. Glutamate 461 serves as the catalytic Charge relay system.

The protein belongs to the aldehyde dehydrogenase family. In terms of assembly, dimer of dimers. K(+) serves as cofactor.

It catalyses the reaction betaine aldehyde + NAD(+) + H2O = glycine betaine + NADH + 2 H(+). It participates in amine and polyamine biosynthesis; betaine biosynthesis via choline pathway; betaine from betaine aldehyde: step 1/1. Involved in the biosynthesis of the osmoprotectant glycine betaine. Catalyzes the irreversible oxidation of betaine aldehyde to the corresponding acid. The sequence is that of Betaine aldehyde dehydrogenase from Brucella abortus (strain S19).